The following is a 489-amino-acid chain: Lysine--tRNA ligase (489 aa).

Residues Glu399 and Glu406 each contribute to the Mg(2+) site.

This sequence belongs to the class-II aminoacyl-tRNA synthetase family. As to quaternary structure, homodimer. Mg(2+) is required as a cofactor.

It is found in the cytoplasm. It carries out the reaction tRNA(Lys) + L-lysine + ATP = L-lysyl-tRNA(Lys) + AMP + diphosphate. The protein is Lysine--tRNA ligase of Malacoplasma penetrans (strain HF-2) (Mycoplasma penetrans).